Reading from the N-terminus, the 344-residue chain is Lipase chaperone (344 aa).

Residues 14–34 (AAIYGVVGLAAIAGVAMWSGA) traverse the membrane as a helical segment.

Belongs to the lipase chaperone family.

The protein resides in the cell inner membrane. Its function is as follows. May be involved in the folding of the extracellular lipase during its passage through the periplasm. The chain is Lipase chaperone from Burkholderia cenocepacia (strain HI2424).